Reading from the N-terminus, the 430-residue chain is Tol-Pal system protein TolB (430 aa).

The first 21 residues, 1-21 (MKQAFRLMVGLLVLWASVLHA), serve as a signal peptide directing secretion.

The protein belongs to the TolB family. As to quaternary structure, the Tol-Pal system is composed of five core proteins: the inner membrane proteins TolA, TolQ and TolR, the periplasmic protein TolB and the outer membrane protein Pal. They form a network linking the inner and outer membranes and the peptidoglycan layer.

Its subcellular location is the periplasm. Functionally, part of the Tol-Pal system, which plays a role in outer membrane invagination during cell division and is important for maintaining outer membrane integrity. TolB occupies a key intermediary position in the Tol-Pal system because it communicates directly with both membrane-embedded components, Pal in the outer membrane and TolA in the inner membrane. The sequence is that of Tol-Pal system protein TolB from Edwardsiella ictaluri (strain 93-146).